The primary structure comprises 1438 residues: Pyochelin synthetase PchE (1438 aa).

The Carrier 1 domain maps to 6–85; it reads DSRTALRDWL…AWLDLLACAD (80 aa). S46 bears the O-(pantetheine 4'-phosphoryl)serine mark. Residues 136 to 442 are condensation/cyclization; sequence RTRDVDPQRL…ARRQGQPRSA (307 aa). The interval 563–950 is adenylation; it reads RAAEAPDADA…GRVDQQVKVR (388 aa). Positions 1350–1425 constitute a Carrier 2 domain; the sequence is EPLEAHEQAL…GLARHLQVQT (76 aa). An O-(pantetheine 4'-phosphoryl)serine modification is found at S1385.

It belongs to the NRP synthetase family. Pantetheine 4'-phosphate is required as a cofactor.

It catalyses the reaction holo-[peptidyl-carrier protein] + L-cysteine + ATP = L-cysteinyl-[peptidyl-carrier protein] + AMP + diphosphate. It functions in the pathway siderophore biosynthesis. It participates in antifungal biosynthesis. Functionally, involved in the biosynthesis of the siderophore pyochelin. Accepts salicylate activated by PchD at the first peptidyl carrier domain (ArCP), and activates and fixes one molecule of cysteine at the second peptidyl carrier domain (PCP1) via a thioester linkage to the phosphopanthetheine moiety. Then catalyzes the condensation reaction between the salicylate bound to the first site and the cysteine bound to the second site, and the cyclization of the cysteine to form the salicyl-thiazolinyl-S-PCP1 intermediate at the second site. When this intermediate is released by the action of a thioesterase, it produces the antifungal antibiotic dihydroaeruginoic acid (Dha or hydroxyphenyl-thiazolinyl-carboxylate). This Pseudomonas aeruginosa (strain ATCC 15692 / DSM 22644 / CIP 104116 / JCM 14847 / LMG 12228 / 1C / PRS 101 / PAO1) protein is Pyochelin synthetase PchE.